Here is a 402-residue protein sequence, read N- to C-terminus: MVVSVTPRHSTGGDGIRSVTVLGSTGSVGSNTVELIEAYPERYRTVALVARRNVAALAGQARRLRPEVAVVADEAHYADLKDALAGTGIAAAAGPAAVVEAAQRPADWVMAAIVGAAGLEPTLAAARRGAIVAFANKECLVCAGELLMAEVRRHGATLLPVDSEHSAIFQVFDPERRPAVSRLILTASGGPFRTWTRERMAAATPKEACAHPNWTMGAKISVDSASMMNKGLEIIEACHLFGMPDGQIDVLVHPQSVVHSMVEYVDGSVLAQLGTPDMRTPIAVALGWPDRIATPGARLDLIKSSRLEFEAPDPLRFPALRLARHALQCGGAAPTLLNAANEVAVQAFLEERIGFLDIERVVEATLASLPHSELNDLDDVRTADADARRFASEMVAAGRGSR.

Residues threonine 25, glycine 26, serine 27, valine 28, arginine 52, asparagine 53, and asparagine 136 each coordinate NADPH. Lysine 137 is a 1-deoxy-D-xylulose 5-phosphate binding site. Glutamate 138 contributes to the NADPH binding site. Aspartate 162 lines the Mn(2+) pocket. The 1-deoxy-D-xylulose 5-phosphate site is built by serine 163, glutamate 164, serine 188, and histidine 211. Position 164 (glutamate 164) interacts with Mn(2+). An NADPH-binding site is contributed by glycine 217. Positions 224, 229, 230, and 233 each coordinate 1-deoxy-D-xylulose 5-phosphate. A Mn(2+)-binding site is contributed by glutamate 233.

This sequence belongs to the DXR family. Mg(2+) serves as cofactor. Mn(2+) is required as a cofactor.

The enzyme catalyses 2-C-methyl-D-erythritol 4-phosphate + NADP(+) = 1-deoxy-D-xylulose 5-phosphate + NADPH + H(+). It functions in the pathway isoprenoid biosynthesis; isopentenyl diphosphate biosynthesis via DXP pathway; isopentenyl diphosphate from 1-deoxy-D-xylulose 5-phosphate: step 1/6. Its function is as follows. Catalyzes the NADPH-dependent rearrangement and reduction of 1-deoxy-D-xylulose-5-phosphate (DXP) to 2-C-methyl-D-erythritol 4-phosphate (MEP). This Rhodospirillum centenum (strain ATCC 51521 / SW) protein is 1-deoxy-D-xylulose 5-phosphate reductoisomerase.